A 422-amino-acid chain; its full sequence is MAFIAALGLLMVGICPAVTYWATADGQLGGHTAVQKDRDHEIQLDSVTLASINTDFAFSLYKKLALENPHKNIVFSPLSISAALALMSLGAKGNTLEEILEGLKFNLPETPEADIHQNFGHLLQMLIQPENQVQINAGNALFIDKHLQILTEFKEKARALYKAEAFTTDFQRPREATKLINDYVRKQTQGKIKELVSDLHRNTSMALVNFLNFQGFWNVTFDPEDTFLGNFTLDRKRTVNVPMMKTEELTTNYFRDEEMQSTVMELNYIGNASFLFILPDQGRIQHVEDSLQPQSLRKWRKSLRPRMLDELSLPKFSLSQDYNLNDILPELGIKEVFSTQADLSGITGAKNIRVSQMIHQAALDVTETHTEADVITIARYNFQSAKIKAKIVKVDREFLYLILDPMFKSISVMGKVINPLTN.

An N-terminal signal peptide occupies residues 1 to 17 (MAFIAALGLLMVGICPA). N-linked (GlcNAc...) asparagine glycosylation is found at Asn-218, Asn-230, and Asn-271. Positions 369–394 (HTEADVITIARYNFQSAKIKAKIVKV) are RCL.

Belongs to the serpin family.

The protein localises to the secreted. The polypeptide is Serine protease inhibitor A3A (Serpina3a) (Mus musculus (Mouse)).